Here is a 251-residue protein sequence, read N- to C-terminus: Protein unc-119 homolog B (251 aa).

Positions 1–28 are disordered; that stretch reads MSGSNPKAAAAASAAGPGGLVAGKEEKK. Position 2 is an N-acetylserine (S2). The residue at position 24 (K24) is an N6-acetyllysine. A tetradecanoate-binding site is contributed by Y142.

Belongs to the PDE6D/unc-119 family. As to quaternary structure, found in a complex with ARL3, RP2 and UNC119B; RP2 induces hydrolysis of GTP ARL3 in the complex, leading to the release of UNC119B. Interacts with NPHP3 (when myristoylated). Interacts with CYS1 (when myristoylated). Interacts with MACIR; interaction only takes place when UNC119B is not liganded with myristoylated proteins.

Its subcellular location is the cell projection. It is found in the cilium. In terms of biological role, myristoyl-binding protein that acts as a cargo adapter: specifically binds the myristoyl moiety of a subset of N-terminally myristoylated proteins and is required for their localization. Binds myristoylated NPHP3 and plays a key role in localization of NPHP3 to the primary cilium membrane. Does not bind all myristoylated proteins. Probably plays a role in trafficking proteins in photoreceptor cells. In Homo sapiens (Human), this protein is Protein unc-119 homolog B (UNC119B).